We begin with the raw amino-acid sequence, 282 residues long: Elongation factor Ts (282 aa).

Residues 80-83 form an involved in Mg(2+) ion dislocation from EF-Tu region; sequence TDFV.

Belongs to the EF-Ts family.

The protein localises to the cytoplasm. In terms of biological role, associates with the EF-Tu.GDP complex and induces the exchange of GDP to GTP. It remains bound to the aminoacyl-tRNA.EF-Tu.GTP complex up to the GTP hydrolysis stage on the ribosome. The polypeptide is Elongation factor Ts (Aliivibrio salmonicida (strain LFI1238) (Vibrio salmonicida (strain LFI1238))).